The following is a 425-amino-acid chain: Spermatogenesis- and oogenesis-specific basic helix-loop-helix-containing protein 2 (425 aa).

The bHLH domain maps to 201-252; the sequence is KISLLHSSKEKLRRERIKYCCEQLRTLLPYVKGRKNDAASVLEATVDYVKYI.

In terms of assembly, forms both hetero- and homodimers with SOHLH1.

The protein localises to the nucleus. It is found in the cytoplasm. In terms of biological role, transcription regulator of both male and female germline differentiation. Suppresses genes involved in spermatogonial stem cells maintenance, and induces genes important for spermatogonial differentiation. Coordinates oocyte differentiation without affecting meiosis I. The chain is Spermatogenesis- and oogenesis-specific basic helix-loop-helix-containing protein 2 (SOHLH2) from Homo sapiens (Human).